The chain runs to 639 residues: MYEQFEFSFFFFENSDNKVKYKAHLISSIKRWSIITCMRCFWTVQKSIFKARFFACRNFVKKHNYKLISTMTGSTEMVPPTMKHTVDNKRLSSPLTDSGNRRTKKPKLRKYKAKKVETTSPMGVLEFEVNDLLKSQNLSREQVLNDVTSILNDKSSTDGPIVLQYHREVKNVKVLEITSNGNGLALIDNPVETEKKQVVIIPFGLPGDVVNIKVFKTHPYYVESDLLDVVEKSPMRRDDLIRDKYFGKSSGSQLEFLTYDDQLELKRKTIMNAYKFFAPRLVAEKLLPPFDTTVASPLQFGYRTKITPHFDMPKRKQKELSVRPPLGFGQKGRPQWRKDTLDIGGHGSILDIDECVLATEVLNKGLTNERRKFEQEFKNYKKGATILLRENTTILDPSKPTLEQLTEEASRDENGDISYVEVEDKKNNVRLAKTCVTNPRQIVTEYVDGYTFNFSAGEFFQNNNSILPIVTKYVRDNLQAPAKGDDNKTKFLVDAYCGSGLFSICSSKGVDKVIGVEISADSVSFAEKNAKANGVENCRFIVGKAEKLFESIDTPSENTSVILDPPRKGCDELFLKQLAAYNPAKIIYISCNVHSQARDVEYFLKETENGSAHQIESIRGFDFFPQTHHVESVCIMKRI.

The disordered stretch occupies residues 78 to 113; sequence VPPTMKHTVDNKRLSSPLTDSGNRRTKKPKLRKYKA. Phosphoserine is present on residues serine 92 and serine 93. Basic residues predominate over residues 101–113; sequence RRTKKPKLRKYKA. One can recognise a TRAM domain in the interval 163 to 228; sequence LQYHREVKNV…PYYVESDLLD (66 aa). S-adenosyl-L-methionine-binding residues include glutamine 461, tyrosine 496, glutamate 517, and aspartate 564. Cysteine 591 (nucleophile) is an active-site residue. The active-site Proton acceptor is the glutamate 631.

Belongs to the class I-like SAM-binding methyltransferase superfamily. RNA M5U methyltransferase family.

It catalyses the reaction uridine(54) in tRNA + S-adenosyl-L-methionine = 5-methyluridine(54) in tRNA + S-adenosyl-L-homocysteine + H(+). Functionally, catalyzes the formation of 5-methyl-uridine at position 54 (m5U54) in all tRNA. May also have a role in tRNA stabilization or maturation. This is tRNA (uracil(54)-C(5))-methyltransferase (TRM2) from Saccharomyces cerevisiae (strain ATCC 204508 / S288c) (Baker's yeast).